The chain runs to 235 residues: 2,3-bisphosphoglycerate-dependent phosphoglycerate mutase (235 aa).

Residues 8 to 15 (RHGESIWN), 21 to 22 (TG), arginine 58, 110 to 113 (ERYY), lysine 121, 137 to 138 (RR), and 181 to 182 (GN) each bind substrate. Histidine 9 (tele-phosphohistidine intermediate) is an active-site residue. Glutamate 110 functions as the Proton donor/acceptor in the catalytic mechanism.

Belongs to the phosphoglycerate mutase family. BPG-dependent PGAM subfamily.

The enzyme catalyses (2R)-2-phosphoglycerate = (2R)-3-phosphoglycerate. It functions in the pathway carbohydrate degradation; glycolysis; pyruvate from D-glyceraldehyde 3-phosphate: step 3/5. In terms of biological role, catalyzes the interconversion of 2-phosphoglycerate and 3-phosphoglycerate. The chain is 2,3-bisphosphoglycerate-dependent phosphoglycerate mutase from Methanococcus vannielii (strain ATCC 35089 / DSM 1224 / JCM 13029 / OCM 148 / SB).